The following is a 204-amino-acid chain: Rho GDP-dissociation inhibitor 1 (204 aa).

The segment at 1–36 (MAEQEPTAEQLAQIAAENEEDEHSVNYKPPAQKSIQ) is disordered. Residue A2 is modified to N-acetylalanine. S34 carries the post-translational modification Phosphoserine. K43 is subject to N6-acetyllysine. Residue S47 is modified to Phosphoserine. N6-acetyllysine is present on residues K105 and K127. Residues K138 and K141 each participate in a glycyl lysine isopeptide (Lys-Gly) (interchain with G-Cter in SUMO1); alternate cross-link. Glycyl lysine isopeptide (Lys-Gly) (interchain with G-Cter in SUMO2); alternate cross-links involve residues K138 and K141. The residue at position 141 (K141) is an N6-acetyllysine; alternate. An N6-succinyllysine; alternate modification is found at K141. K178 is modified (N6-acetyllysine).

It belongs to the Rho GDI family. In terms of assembly, monomer. Interacts with FER. Interacts with PLXNB3. Forms a heterodimer with RAC1. Interacts with RHOA, the affinity is increased by three orders of magnitude when RHOA is prenylated. Interacts with PSMD10; the interaction increases ARHGDIA association with RHOA, leading to ARHGDIA-mediated inactivation of RHOA and ROCK and prolonged AKT activation. Interacts with KANK2; the interaction is direct and may regulate the interaction of ARHGDIA with RHOA, RAC1 and CDC42. Interacts with RHOC. Interacts with CDC42. Interacts with NGFR (via death domain); NGFR binding decreases the affinity for RHOA.

It is found in the cytoplasm. In terms of biological role, controls Rho proteins homeostasis. Regulates the GDP/GTP exchange reaction of the Rho proteins by inhibiting the dissociation of GDP from them, and the subsequent binding of GTP to them. Retains Rho proteins such as CDC42, RAC1 and RHOA in an inactive cytosolic pool, regulating their stability and protecting them from degradation. Actively involved in the recycling and distribution of activated Rho GTPases in the cell, mediates extraction from membranes of both inactive and activated molecules due its exceptionally high affinity for prenylated forms. Through the modulation of Rho proteins, may play a role in cell motility regulation. In glioma cells, inhibits cell migration and invasion by mediating the signals of SEMA5A and PLXNB3 that lead to inactivation of RAC1. The chain is Rho GDP-dissociation inhibitor 1 (ARHGDIA) from Homo sapiens (Human).